The following is a 937-amino-acid chain: Alanine--tRNA ligase (937 aa).

Positions 626, 630, 727, and 731 each coordinate Zn(2+).

The protein belongs to the class-II aminoacyl-tRNA synthetase family. It depends on Zn(2+) as a cofactor.

The protein resides in the cytoplasm. It carries out the reaction tRNA(Ala) + L-alanine + ATP = L-alanyl-tRNA(Ala) + AMP + diphosphate. In terms of biological role, catalyzes the attachment of alanine to tRNA(Ala) in a two-step reaction: alanine is first activated by ATP to form Ala-AMP and then transferred to the acceptor end of tRNA(Ala). Also edits incorrectly charged Ser-tRNA(Ala) and Gly-tRNA(Ala) via its editing domain. The sequence is that of Alanine--tRNA ligase from Opitutus terrae (strain DSM 11246 / JCM 15787 / PB90-1).